The following is a 92-amino-acid chain: Small ribosomal subunit protein uS19 (92 aa).

Belongs to the universal ribosomal protein uS19 family.

Protein S19 forms a complex with S13 that binds strongly to the 16S ribosomal RNA. In Rhizobium etli (strain CIAT 652), this protein is Small ribosomal subunit protein uS19.